A 785-amino-acid polypeptide reads, in one-letter code: Polyribonucleotide nucleotidyltransferase (785 aa).

The Mg(2+) site is built by Asp516 and Asp522. The region spanning 582-641 is the KH domain; the sequence is PRVTTVKIPVDKIGMVIGPKGQTINAIQDETGAEISIEDDGTIYVGATNGPAAQAAVERI. The S1 motif domain maps to 653-722; it reads GDRFLGTVVK…QRGKIYLDKV (70 aa). A disordered region spans residues 722-785; sequence VRPEGAEAPA…SRPRRRTRRS (64 aa). A compositionally biased stretch (basic and acidic residues) spans 734–764; the sequence is AAERPAGRDRGDRGPRDRGDRGGRGPDRGDS.

This sequence belongs to the polyribonucleotide nucleotidyltransferase family. Mg(2+) serves as cofactor.

The protein localises to the cytoplasm. It catalyses the reaction RNA(n+1) + phosphate = RNA(n) + a ribonucleoside 5'-diphosphate. Functionally, involved in mRNA degradation. Catalyzes the phosphorolysis of single-stranded polyribonucleotides processively in the 3'- to 5'-direction. This Salinispora tropica (strain ATCC BAA-916 / DSM 44818 / JCM 13857 / NBRC 105044 / CNB-440) protein is Polyribonucleotide nucleotidyltransferase.